A 360-amino-acid chain; its full sequence is Peptide chain release factor 1 (360 aa).

The residue at position 235 (Gln-235) is an N5-methylglutamine. Residues 285 to 295 are compositionally biased toward basic and acidic residues; the sequence is RQAAEQADTRR. Positions 285 to 309 are disordered; sequence RQAAEQADTRRNLLGSGDRSDKIRT.

The protein belongs to the prokaryotic/mitochondrial release factor family. Post-translationally, methylated by PrmC. Methylation increases the termination efficiency of RF1.

Its subcellular location is the cytoplasm. In terms of biological role, peptide chain release factor 1 directs the termination of translation in response to the peptide chain termination codons UAG and UAA. The sequence is that of Peptide chain release factor 1 from Actinobacillus pleuropneumoniae serotype 7 (strain AP76).